Here is a 382-residue protein sequence, read N- to C-terminus: D-galactonate dehydratase (382 aa).

Asp183 is a Mg(2+) binding site. The active-site Proton donor is the His185. The Mg(2+) site is built by Glu209 and Glu235. His285 serves as the catalytic Proton acceptor.

Belongs to the mandelate racemase/muconate lactonizing enzyme family. GalD subfamily. It depends on Mg(2+) as a cofactor.

It catalyses the reaction D-galactonate = 2-dehydro-3-deoxy-D-galactonate + H2O. Its pathway is carbohydrate acid metabolism; D-galactonate degradation; D-glyceraldehyde 3-phosphate and pyruvate from D-galactonate: step 1/3. Functionally, catalyzes the dehydration of D-galactonate to 2-keto-3-deoxy-D-galactonate. This Salmonella paratyphi A (strain AKU_12601) protein is D-galactonate dehydratase.